A 1220-amino-acid polypeptide reads, in one-letter code: MGDMANSSIEFHPKPQQQRDVPQAGGFGCTLAELRTLMELRGAEALQKIEEAYGDVSGLCRRLKTSPTEGLADNTNDLEKRRQIYGQNFIPPKQPKTFLQLVWEALQDVTLIILEVAAIVSLGLSFYAPPGEESEACGNVSGGAEDEGEAEAGWIEGAAILLSVICVVLVTAFNDWSKEKQFRGLQSRIEQEQKFTVIRNGQLLQVPVAALVVGDIAQVKYGDLLPADGVLIQANDLKIDESSLTGESDHVRKSADKDPMLLSGTHVMEGSGRMVVTAVGVNSQTGIIFTLLGAGGEEEEKKDKKGKQQDGAMESSQTKAKKQDGAVAMEMQPLKSAEGGEMEEREKKKANAPKKEKSVLQGKLTKLAVQIGKAGLVMSAITVIILVLYFVIETFVVEGRTWLAECTPVYVQYFVKFFIIGVTVLVVAVPEGLPLAVTISLAYSVKKMMKDNNLVRHLDACETMGNATAICSDKTGTLTTNRMTVVQSYLGDTHYKEIPAPSALTPKILDLLVHAISINSAYTTKILPPEKEGALPRQVGNKTECALLGFVLDLKRDFQPVREQIPEDKLYKVYTFNSVRKSMSTVIRMPDGGFRLFSKGASEILLKKCTNILNSNGELRGFRPRDRDDMVRKIIEPMACDGLRTICIAYRDFSAGQEPDWDNENEVVGDLTCIAVVGIEDPVRPEVPEAIRKCQRAGITVRMVTGDNINTARAIAAKCGIIQPGEDFLCLEGKEFNRRIRNEKGEIEQERLDKVWPKLRVLARSSPTDKHTLVKGIIDSTTGEQRQVVAVTGDGTNDGPALKKADVGFAMGIAGTDVAKEASDIILTDDNFTSIVKAVMWGRNVYDSISKFLQFQLTVNVVAVIVAFTGACITQDSPLKAVQMLWVNLIMDTFASLALATEPPTESLLLRKPYGRDKPLISRTMMKNILGHAVYQLAIIFTLLFVGELFFDIDSGRNAPLHSPPSEHYTIIFNTFVMMQLFNEINARKIHGERNVFDGIFSNPIFCTIVLGTFGIQIVIVQFGGKPFSCSPLSTEQWLWCLFVGVGELVWGQVIATIPTSQLKCLKEAGHGPGKDEMTDEELAEGEEEIDHAERELRRGQILWFRGLNRIQTQIRVVKAFRSSLYEGLEKPESKTSIHNFMATPEFLINDYTHNIPLIDDTDVDENEERLRAPPPPSPNQNNNAIDSGIYLTTHVTKSATSSVFSSSPGSPLHSVETSL.

Residues 1-20 (MGDMANSSIEFHPKPQQQRD) show a composition bias toward polar residues. The interval 1–23 (MGDMANSSIEFHPKPQQQRDVPQ) is disordered. The Cytoplasmic segment spans residues 1–97 (MGDMANSSIE…NFIPPKQPKT (97 aa)). The residue at position 8 (Ser8) is a Phosphoserine. A helical transmembrane segment spans residues 98-118 (FLQLVWEALQDVTLIILEVAA). Residues 119-155 (IVSLGLSFYAPPGEESEACGNVSGGAEDEGEAEAGWI) are Extracellular-facing. The helical transmembrane segment at 156–176 (EGAAILLSVICVVLVTAFNDW) threads the bilayer. Residues 177–364 (SKEKQFRGLQ…KEKSVLQGKL (188 aa)) are Cytoplasmic-facing. Residues 298–355 (EEEKKDKKGKQQDGAMESSQTKAKKQDGAVAMEMQPLKSAEGGEMEEREKKKANAPKK) form a disordered region. Composition is skewed to basic and acidic residues over residues 299–308 (EEKKDKKGKQ) and 342–355 (MEER…APKK). The helical transmembrane segment at 365 to 384 (TKLAVQIGKAGLVMSAITVI) threads the bilayer. Topologically, residues 385–417 (ILVLYFVIETFVVEGRTWLAECTPVYVQYFVKF) are extracellular. A helical membrane pass occupies residues 418–435 (FIIGVTVLVVAVPEGLPL). Residues 436–849 (AVTISLAYSV…MWGRNVYDSI (414 aa)) lie on the Cytoplasmic side of the membrane. Asp473 acts as the 4-aspartylphosphate intermediate in catalysis. Asp794 and Asp798 together coordinate Mg(2+). A helical membrane pass occupies residues 850–869 (SKFLQFQLTVNVVAVIVAFT). Topologically, residues 870–879 (GACITQDSPL) are extracellular. The helical transmembrane segment at 880 to 900 (KAVQMLWVNLIMDTFASLALA) threads the bilayer. The Cytoplasmic segment spans residues 901 to 920 (TEPPTESLLLRKPYGRDKPL). Residues 921–943 (ISRTMMKNILGHAVYQLAIIFTL) form a helical membrane-spanning segment. Topologically, residues 944 to 961 (LFVGELFFDIDSGRNAPL) are extracellular. The chain crosses the membrane as a helical span at residues 962-983 (HSPPSEHYTIIFNTFVMMQLFN). Over 984 to 1002 (EINARKIHGERNVFDGIFS) the chain is Cytoplasmic. Residues 1003–1024 (NPIFCTIVLGTFGIQIVIVQFG) traverse the membrane as a helical segment. Residues 1025–1034 (GKPFSCSPLS) lie on the Extracellular side of the membrane. Residues 1035–1056 (TEQWLWCLFVGVGELVWGQVIA) traverse the membrane as a helical segment. At 1057–1220 (TIPTSQLKCL…SPLHSVETSL (164 aa)) the chain is on the cytoplasmic side. Position 1079 is a phosphothreonine (Thr1079). The interval 1097–1114 (LRRGQILWFRGLNRIQTQ) is calmodulin-binding subdomain A. Thr1113 carries the post-translational modification Phosphothreonine; by PKC. Residues 1115 to 1124 (IRVVKAFRSS) are calmodulin-binding subdomain B. The segment at 1166-1186 (ENEERLRAPPPPSPNQNNNAI) is disordered.

Belongs to the cation transport ATPase (P-type) (TC 3.A.3) family. Type IIB subfamily. As to quaternary structure, interacts with PDZD11. Interacts (via N-terminus) with YWHAE. In terms of tissue distribution, highly expressed in the cerebellum. Expressed in adrenal glands.

Its subcellular location is the cell membrane. It is found in the presynaptic cell membrane. It carries out the reaction Ca(2+)(in) + ATP + H2O = Ca(2+)(out) + ADP + phosphate + H(+). With respect to regulation, down-regulated by YWHAE. Its function is as follows. ATP-driven Ca(2+) ion pump involved in the maintenance of basal intracellular Ca(2+) levels at the presynaptic terminals. Uses ATP as an energy source to transport cytosolic Ca(2+) ions across the plasma membrane to the extracellular compartment. May counter-transport protons, but the mechanism and the stoichiometry of this Ca(2+)/H(+) exchange remains to be established. The polypeptide is Plasma membrane calcium-transporting ATPase 3 (Homo sapiens (Human)).